Reading from the N-terminus, the 158-residue chain is uncharacterized protein (158 aa).

This is an uncharacterized protein from Ureaplasma parvum serovar 3 (strain ATCC 700970).